Reading from the N-terminus, the 562-residue chain is Arginine--tRNA ligase (562 aa).

Positions 121–131 (PNIAKPMGMGH) match the 'HIGH' region motif.

The protein belongs to the class-I aminoacyl-tRNA synthetase family. As to quaternary structure, monomer.

The protein localises to the cytoplasm. It catalyses the reaction tRNA(Arg) + L-arginine + ATP = L-arginyl-tRNA(Arg) + AMP + diphosphate. This is Arginine--tRNA ligase from Limosilactobacillus fermentum (strain NBRC 3956 / LMG 18251) (Lactobacillus fermentum).